The primary structure comprises 349 residues: GDSL esterase/lipase At1g58525 (349 aa).

The first 19 residues, 1–19, serve as a signal peptide directing secretion; the sequence is MKLQILLLALVLIAVEANA. A glycan (N-linked (GlcNAc...) asparagine) is linked at N25. The Nucleophile role is filled by S37. N316 carries an N-linked (GlcNAc...) asparagine glycan. Catalysis depends on residues D324 and H327.

This sequence belongs to the 'GDSL' lipolytic enzyme family.

The protein localises to the secreted. This Arabidopsis thaliana (Mouse-ear cress) protein is GDSL esterase/lipase At1g58525.